The sequence spans 528 residues: Na(+)/H(+) antiporter NhaB (528 aa).

The next 11 membrane-spanning stretches (helical) occupy residues 23 to 43 (VAII…NPFV), 45 to 65 (GWLL…CYPL), 90 to 110 (LVAN…IYFM), 136 to 156 (CFAA…AVVI), 204 to 224 (LLMH…VGEP), 237 to 257 (FGEF…CGLI), 305 to 325 (GIIA…VGLI), 350 to 370 (EEAL…AVII), 392 to 412 (LALF…VFVG), 450 to 470 (ATPN…APLI), and 479 to 499 (VMAL…IMFF).

The protein belongs to the NhaB Na(+)/H(+) (TC 2.A.34) antiporter family.

It is found in the cell inner membrane. It carries out the reaction 2 Na(+)(in) + 3 H(+)(out) = 2 Na(+)(out) + 3 H(+)(in). Functionally, na(+)/H(+) antiporter that extrudes sodium in exchange for external protons. Can also transport lithium and potassium. The chain is Na(+)/H(+) antiporter NhaB from Vibrio parahaemolyticus serotype O3:K6 (strain RIMD 2210633).